The sequence spans 79 residues: Large ribosomal subunit protein uL24 (79 aa).

The interval 1 to 29 (MPKLKKLLLKVSTSKPNTNPPSQNEEKGT) is disordered. A compositionally biased stretch (polar residues) spans 11–23 (VSTSKPNTNPPSQ).

This sequence belongs to the universal ribosomal protein uL24 family. As to quaternary structure, part of the 50S ribosomal subunit.

Functionally, one of two assembly initiator proteins, it binds directly to the 5'-end of the 23S rRNA, where it nucleates assembly of the 50S subunit. In terms of biological role, one of the proteins that surrounds the polypeptide exit tunnel on the outside of the subunit. The protein is Large ribosomal subunit protein uL24 (rplX) of Onion yellows phytoplasma (strain OY-M).